Consider the following 1030-residue polypeptide: Calcium-transporting ATPase 4, plasma membrane-type (1030 aa).

Residues 1 to 157 are Cytoplasmic-facing; the sequence is MSNLLRDFEV…NRYTEKPARS (157 aa). The tract at residues 19–30 is interaction with calmodulin; the sequence is ARQRWRSSVSIV. Serine 28 carries the post-translational modification Phosphoserine. A helical transmembrane segment spans residues 158 to 178; the sequence is FLMFVWEALHDITLIILMVCA. Residues 179 to 196 lie on the Lumenal side of the membrane; sequence VVSIGVGVATEGFPRGMY. Residues 197–217 traverse the membrane as a helical segment; that stretch reads DGTGILLSILLVVMVTAISDY. Over 218 to 345 the chain is Cytoplasmic; the sequence is KQSLQFRDLD…EDETPLQVKL (128 aa). A helical transmembrane segment spans residues 346 to 365; the sequence is NGVATIIGKIGLSFAVLTFV. Topologically, residues 366–395 are lumenal; that stretch reads VLCIRFVLDKATSGSFTNWSSEDALTLLDY. The helical transmembrane segment at 396 to 413 threads the bilayer; the sequence is FAISVTIIVVAVPEGLPL. Over 414 to 804 the chain is Cytoplasmic; it reads AVTLSLAFAM…RWGRAVYINI (391 aa). Aspartate 451 (4-aspartylphosphate intermediate) is an active-site residue. The Mg(2+) site is built by aspartate 749 and aspartate 753. Residues 805–823 traverse the membrane as a helical segment; it reads QKFVQFQLTVNVVALIINF. At 824-834 the chain is on the lumenal side; that stretch reads VSACITGSAPL. Residues 835 to 855 form a helical membrane-spanning segment; the sequence is TAVQLLWVNMIMDTLGALALA. At 856–875 the chain is on the cytoplasmic side; that stretch reads TEPPNEGLMKRAPIARTASF. Residues 876–898 traverse the membrane as a helical segment; sequence ITKTMWRNIAGQSVYQLIVLGIL. Residues 899–910 lie on the Lumenal side of the membrane; it reads NFAGKSLLKLDG. The chain crosses the membrane as a helical span at residues 911–932; sequence PDSTAVLNTVIFNSFVFCQVFN. Residues 933–950 are Cytoplasmic-facing; it reads EINSREIEKINVFKGMFN. A helical transmembrane segment spans residues 951–972; it reads SWVFTWVMTVTVVFQVIIVEFL. At 973 to 982 the chain is on the lumenal side; it reads GAFASTVPLS. The helical transmembrane segment at 983-1004 threads the bilayer; it reads WQHWLLSILIGSLNMIVAVILK. Over 1005-1030 the chain is Cytoplasmic; sequence CVPVESRHHHDGYDLLPSGPSSSNSA.

This sequence belongs to the cation transport ATPase (P-type) (TC 3.A.3) family. Type IIB subfamily.

Its subcellular location is the vacuole membrane. It catalyses the reaction Ca(2+)(in) + ATP + H2O = Ca(2+)(out) + ADP + phosphate + H(+). Its activity is regulated as follows. Activated by calmodulin. In terms of biological role, this magnesium-dependent enzyme catalyzes the hydrolysis of ATP coupled with the translocation of calcium from the cytosol into small vacuoles. The polypeptide is Calcium-transporting ATPase 4, plasma membrane-type (ACA4) (Arabidopsis thaliana (Mouse-ear cress)).